Here is a 496-residue protein sequence, read N- to C-terminus: ATP-dependent protease ATPase subunit HslU2 (496 aa).

The transit peptide at 1–10 (MIRFSWVRLC) directs the protein to the mitochondrion. ATP contacts are provided by residues valine 51 and 94–99 (GVGKTE). Residues 177–191 (GSFGSSTRNSGSGDS) show a composition bias toward low complexity. The tract at residues 177–204 (GSFGSSTRNSGSGDSSAEEDKNSSSRDN) is disordered. ATP contacts are provided by aspartate 308, glutamate 374, and arginine 446.

This sequence belongs to the ClpX chaperone family. HslU subfamily. As to quaternary structure, a double ring-shaped homohexamer of HslV is capped on each side by a ring-shaped HslU homohexamer. The assembly of the HslU/HslV complex (HslVU) is dependent on binding of ATP.

The protein resides in the mitochondrion matrix. It localises to the kinetoplast. In terms of biological role, ATPase subunit of a proteasome-like degradation complex; this subunit has chaperone activity. The binding of ATP and its subsequent hydrolysis by HslU are essential for unfolding of protein substrates subsequently hydrolyzed by HslV. HslU recognizes the N-terminal part of its protein substrates and unfolds these before they are guided to HslV for hydrolysis. The HslVU protease complex functions in mitochondrial DNA replication by regulating DNA helicase PIF2 protein levels. The sequence is that of ATP-dependent protease ATPase subunit HslU2 (HslU2) from Trypanosoma brucei brucei (strain 927/4 GUTat10.1).